Consider the following 342-residue polypeptide: Aromatic amino acid aminotransferase (342 aa).

N6-(pyridoxal phosphate)lysine is present on lysine 214.

Belongs to the class-II pyridoxal-phosphate-dependent aminotransferase family. Homodimer. Requires pyridoxal 5'-phosphate as cofactor.

The catalysed reaction is an aromatic L-alpha-amino acid + 2-oxoglutarate = an aromatic oxo-acid + L-glutamate. In terms of biological role, aminotransferase that catalyzes the conversion of aromatic amino acids and 2-oxoglutarate into corresponding aromatic oxo acids and L-glutamate. This is Aromatic amino acid aminotransferase from Corynebacterium efficiens (strain DSM 44549 / YS-314 / AJ 12310 / JCM 11189 / NBRC 100395).